Consider the following 499-residue polypeptide: Cytosol aminopeptidase (499 aa).

Lys267 and Asp272 together coordinate Mn(2+). Lys279 is a catalytic residue. Residues Asp290, Asp349, and Glu351 each coordinate Mn(2+). Residue Arg353 is part of the active site.

Belongs to the peptidase M17 family. Requires Mn(2+) as cofactor.

It is found in the cytoplasm. It carries out the reaction Release of an N-terminal amino acid, Xaa-|-Yaa-, in which Xaa is preferably Leu, but may be other amino acids including Pro although not Arg or Lys, and Yaa may be Pro. Amino acid amides and methyl esters are also readily hydrolyzed, but rates on arylamides are exceedingly low.. The enzyme catalyses Release of an N-terminal amino acid, preferentially leucine, but not glutamic or aspartic acids.. Its function is as follows. Presumably involved in the processing and regular turnover of intracellular proteins. Catalyzes the removal of unsubstituted N-terminal amino acids from various peptides. This Buchnera aphidicola subsp. Acyrthosiphon pisum (strain APS) (Acyrthosiphon pisum symbiotic bacterium) protein is Cytosol aminopeptidase (pepA).